Here is a 762-residue protein sequence, read N- to C-terminus: Cellulose synthase-like protein H2 (762 aa).

Positions 1–15 are enriched in low complexity; it reads MAVVAAAAATGSTTR. The disordered stretch occupies residues 1-39; the sequence is MAVVAAAAATGSTTRSGGGGGEGTRSGRKKPPPPPLQER. A run of 2 helical transmembrane segments spans residues 47 to 67 and 81 to 101; these read AWAWRLAGLAVLLLLLALLAL and GVWRVALVCEAWFAALCALNV. Residues Asp180 and Asp470 contribute to the active site. Transmembrane regions (helical) follow at residues 541 to 561, 582 to 602, 619 to 639, 673 to 693, 708 to 728, and 739 to 759; these read LAYLIVLGWPLRAPFELCYGL, FSVPLALFISYNTYNFMEYMA, IISVSAWTLAFLTVLLKSLGL, LPVFIPVTALAMLNIVAVTVG, APGIGEFMCCGWLVLCFFPFV, and GIPWSVKLKASLLVAMFVTFC.

This sequence belongs to the glycosyltransferase 2 family. Plant cellulose synthase-like H subfamily.

It localises to the golgi apparatus membrane. Its function is as follows. Thought to be a Golgi-localized beta-glycan synthase that polymerize the backbones of noncellulosic polysaccharides (hemicelluloses) of plant cell wall. The chain is Cellulose synthase-like protein H2 (CSLH2) from Oryza sativa subsp. indica (Rice).